We begin with the raw amino-acid sequence, 274 residues long: SPbeta prophage-derived uncharacterized protein YomD (274 aa).

The chain is SPbeta prophage-derived uncharacterized protein YomD (yomD) from Bacillus subtilis (strain 168).